The primary structure comprises 341 residues: Anthranilate phosphoribosyltransferase (341 aa).

5-phospho-alpha-D-ribose 1-diphosphate is bound by residues glycine 79, 82-83 (GD), threonine 87, 89-92 (NIST), 107-115 (KHGNRSISS), and serine 119. Glycine 79 provides a ligand contact to anthranilate. Residue serine 91 participates in Mg(2+) binding. Residue asparagine 110 participates in anthranilate binding. Arginine 164 is a binding site for anthranilate. The Mg(2+) site is built by aspartate 222 and glutamate 223.

It belongs to the anthranilate phosphoribosyltransferase family. Homodimer. It depends on Mg(2+) as a cofactor.

It carries out the reaction N-(5-phospho-beta-D-ribosyl)anthranilate + diphosphate = 5-phospho-alpha-D-ribose 1-diphosphate + anthranilate. It participates in amino-acid biosynthesis; L-tryptophan biosynthesis; L-tryptophan from chorismate: step 2/5. In terms of biological role, catalyzes the transfer of the phosphoribosyl group of 5-phosphorylribose-1-pyrophosphate (PRPP) to anthranilate to yield N-(5'-phosphoribosyl)-anthranilate (PRA). In Blochmanniella pennsylvanica (strain BPEN), this protein is Anthranilate phosphoribosyltransferase.